Here is a 320-residue protein sequence, read N- to C-terminus: Taste receptor type 2 member 109 (320 aa).

The Extracellular segment spans residues 1-14 (MEHFLKSIFDISKN). The helical transmembrane segment at 15–35 (VLPIILFIELIIGIIGNGFMA) threads the bilayer. Topologically, residues 36–62 (LVHCMDWVKRKKMSLVNQILTTLATSR) are cytoplasmic. The chain crosses the membrane as a helical span at residues 63–83 (ICLLWFMLLGLLITLLDPDLA). The Extracellular portion of the chain corresponds to 84-94 (SARMMIQVASN). Residues 95–115 (LWIIANHMSIWLATCLTVFYF) form a helical membrane-spanning segment. The Cytoplasmic portion of the chain corresponds to 116 to 135 (LKIANFSSSLFLYLKWRVEK). The helical transmembrane segment at 136–156 (VISVIFLVSLVLLFLNMLLMN) threads the bilayer. At 157–191 (LENDMCIAEYHQINISYSFIYHYRADCERRVLRLH) the chain is on the extracellular side. N170 carries an N-linked (GlcNAc...) asparagine glycan. Residues 192 to 212 (IIILSVPFVLSLPTFLLLIFS) traverse the membrane as a helical segment. Residues 213-240 (LWTHHKKMQQHVQGRRDASTTAHFKALQ) are Cytoplasmic-facing. Residues 241 to 261 (TVIAFLLLYCIFILSMLLQFW) form a helical membrane-spanning segment. Residues 262–270 (KYELMKKPL) lie on the Extracellular side of the membrane. Residues 271 to 291 (FILFCHIVYGAFPSFHSYVLI) traverse the membrane as a helical segment. Residues 292–320 (LGDMKLRQASLSVLLWLKCRPNYIETLDL) lie on the Cytoplasmic side of the membrane.

Belongs to the G-protein coupled receptor T2R family.

The protein localises to the membrane. Its function is as follows. Putative taste receptor which may play a role in the perception of bitterness. This Rattus norvegicus (Rat) protein is Taste receptor type 2 member 109.